The primary structure comprises 442 residues: tRNA-2-methylthio-N(6)-dimethylallyladenosine synthase (442 aa).

One can recognise an MTTase N-terminal domain in the interval 2-120 (KKVFIRTFGC…LPKMIVDKET (119 aa)). Cysteine 11, cysteine 49, cysteine 83, cysteine 157, cysteine 161, and cysteine 164 together coordinate [4Fe-4S] cluster. The Radical SAM core domain occupies 143 to 375 (RVEGGAAFVS…NEVIEAETAR (233 aa)). The TRAM domain maps to 378–441 (QTMIGTVQRC…TFSLRGKVVE (64 aa)).

It belongs to the methylthiotransferase family. MiaB subfamily. In terms of assembly, monomer. [4Fe-4S] cluster serves as cofactor.

The protein resides in the cytoplasm. The catalysed reaction is N(6)-dimethylallyladenosine(37) in tRNA + (sulfur carrier)-SH + AH2 + 2 S-adenosyl-L-methionine = 2-methylsulfanyl-N(6)-dimethylallyladenosine(37) in tRNA + (sulfur carrier)-H + 5'-deoxyadenosine + L-methionine + A + S-adenosyl-L-homocysteine + 2 H(+). Its function is as follows. Catalyzes the methylthiolation of N6-(dimethylallyl)adenosine (i(6)A), leading to the formation of 2-methylthio-N6-(dimethylallyl)adenosine (ms(2)i(6)A) at position 37 in tRNAs that read codons beginning with uridine. This Neisseria meningitidis serogroup C / serotype 2a (strain ATCC 700532 / DSM 15464 / FAM18) protein is tRNA-2-methylthio-N(6)-dimethylallyladenosine synthase.